The primary structure comprises 423 residues: Glycine amidinotransferase, mitochondrial (423 aa).

A mitochondrion-targeting transit peptide spans 1 to 43; that stretch reads MLRVRCLRGGSRGAEAVHYIGSRLGRTLTGWVQRTFQSTQAAT. The disordered stretch occupies residues 43 to 63; it reads TASSRNSFAADDKATEPLPKD. Residues S46 and S49 each carry the phosphoserine modification. The span at 52–61 shows a compositional bias: basic and acidic residues; it reads ADDKATEPLP. D170 is an arginine binding site. Residues D254 and H303 contribute to the active site. 4 residues coordinate arginine: D305, R322, S354, and S355. An N6-acetyllysine modification is found at K385. C407 (amidino-cysteine intermediate) is an active-site residue.

The protein belongs to the amidinotransferase family. Homodimer.

The protein localises to the mitochondrion inner membrane. It carries out the reaction L-arginine + glycine = guanidinoacetate + L-ornithine. The enzyme catalyses 4-aminobutanoate + L-arginine = 4-guanidinobutanoate + L-ornithine. It catalyses the reaction beta-alanine + L-arginine = 3-guanidinopropanoate + L-ornithine. The catalysed reaction is taurine + L-arginine = taurocyamine + L-ornithine. The protein operates within amine and polyamine biosynthesis; creatine biosynthesis; creatine from L-arginine and glycine: step 1/2. In terms of biological role, transamidinase that catalyzes the transfer of the amidino group of L-arginine onto the amino moiety of acceptor metabolites such as glycine, beta-alanine, gamma-aminobutyric acid (GABA) and taurine yielding the corresponding guanidine derivatives. Catalyzes the rate-limiting step of creatine biosynthesis, namely the transfer of the amidino group from L-arginine to glycine to generate guanidinoacetate, which is then methylated by GAMT to form creatine. Provides creatine as a source for ATP generation in tissues with high energy demands, in particular skeletal muscle, heart and brain. The polypeptide is Glycine amidinotransferase, mitochondrial (GATM) (Macaca fascicularis (Crab-eating macaque)).